The chain runs to 568 residues: MAQINRKLYSSMYGITTGDIVTLGDTNLKIQVEKDYTTYGEECVFGGGKVIRDGMGQASGFCDEEVLDMVITNALIIDYKGIYKADIGIKNGKIKGIGKAGNPHIQPGVSPTLIIGTITEVVSGEGRILTAGAIDTHVHYISPQQADEALASGITTFVGGGTGPATGTYATTCTPGWYLRKMMEATDNIPINFGFLGKGNSSKSKALEGQIKAGALGLKLHEDWGSTPSVIDTSLKVADEYDVQICIHTDSINECGYIEDTLCAIDGRTIHAYHVEGAGGGHAPDIMKACEYANILPSSTTPTNPYSLNTIDEHLDMLMVCHHLDFNNPEDISFAQSRIRQQTIGAEDFLHDMGAISIFTSDSQAMGRIGEVICRTWQIASRMKEIRGFLSEDQMTGNDNYRVRRYIAKYTINAALAHGLSHIVGSVEKGKLADLVLWRPEFFGTKPDIVIKGGMIAYAQMGDPNASIPTPEPYISRPMYGAFGNAASATSCLFISEASIEAIKGYGLNKMLTVVKGCRVISKNDLKLNNYMPCIDIDSKTFEVSIDGVLISVKPAKKLPLAQLYNLF.

Positions 132–568 (GAIDTHVHYI…LPLAQLYNLF (437 aa)) constitute a Urease domain. The Ni(2+) site is built by His137, His139, and Lys219. Lys219 bears the N6-carboxylysine mark. Residue His221 participates in substrate binding. 2 residues coordinate Ni(2+): His248 and His274. His322 (proton donor) is an active-site residue. Asp362 provides a ligand contact to Ni(2+).

This sequence belongs to the metallo-dependent hydrolases superfamily. Urease alpha subunit family. As to quaternary structure, heterotrimer of UreA (gamma), UreB (beta) and UreC (alpha) subunits. Three heterotrimers associate to form the active enzyme. The cofactor is Ni cation. In terms of processing, carboxylation allows a single lysine to coordinate two nickel ions.

It localises to the cytoplasm. The enzyme catalyses urea + 2 H2O + H(+) = hydrogencarbonate + 2 NH4(+). It participates in nitrogen metabolism; urea degradation; CO(2) and NH(3) from urea (urease route): step 1/1. This is Urease subunit alpha from Azobacteroides pseudotrichonymphae genomovar. CFP2.